The primary structure comprises 352 residues: uncharacterized protein (352 aa).

N-linked (GlcNAc...) asparagine glycans are attached at residues asparagine 14, asparagine 52, and asparagine 70. The interval 41 to 73 is disordered; sequence LSDYKKNKDTLNNSNNNINQPFENSNNFNNNSK. Residues 50–72 show a composition bias toward low complexity; that stretch reads TLNNSNNNINQPFENSNNFNNNS. A helical transmembrane segment spans residues 131–151; that stretch reads IIFKSSGLLITLLVLYLGTFF. Residues asparagine 165, asparagine 186, asparagine 192, asparagine 193, asparagine 203, and asparagine 289 are each glycosylated (N-linked (GlcNAc...) asparagine). Residues 193–213 show a composition bias toward low complexity; that stretch reads NSSNSNNNNINNSNNNNNNNN. Residues 193-219 form a disordered region; the sequence is NSSNSNNNNINNSNNNNNNNNRILSPN.

It is found in the membrane. This is an uncharacterized protein from Dictyostelium discoideum (Social amoeba).